The primary structure comprises 183 residues: Large ribosomal subunit protein uL6 (183 aa).

It belongs to the universal ribosomal protein uL6 family. In terms of assembly, part of the 50S ribosomal subunit.

Its function is as follows. This protein binds to the 23S rRNA, and is important in its secondary structure. It is located near the subunit interface in the base of the L7/L12 stalk, and near the tRNA binding site of the peptidyltransferase center. The chain is Large ribosomal subunit protein uL6 from Chlamydia felis (strain Fe/C-56) (Chlamydophila felis).